We begin with the raw amino-acid sequence, 299 residues long: Tetrahydromethanopterin S-methyltransferase subunit E (299 aa).

6 helical membrane passes run 57–79 (AISG…AWAL), 95–115 (GVAA…RTVG), 133–153 (IGPI…AAYL), 158–178 (LGNP…VGAI), 237–257 (GLCF…GNII), and 262–282 (VTKT…AAGI).

This sequence belongs to the MtrE family. As to quaternary structure, the complex is composed of 8 subunits; MtrA, MtrB, MtrC, MtrD, MtrE, MtrF, MtrG and MtrH.

The protein resides in the cell membrane. It carries out the reaction 5-methyl-5,6,7,8-tetrahydromethanopterin + coenzyme M + 2 Na(+)(in) = 5,6,7,8-tetrahydromethanopterin + methyl-coenzyme M + 2 Na(+)(out). It participates in one-carbon metabolism; methanogenesis from CO(2); methyl-coenzyme M from 5,10-methylene-5,6,7,8-tetrahydromethanopterin: step 2/2. Functionally, part of a complex that catalyzes the formation of methyl-coenzyme M and tetrahydromethanopterin from coenzyme M and methyl-tetrahydromethanopterin. This is an energy-conserving, sodium-ion translocating step. In Methanococcus maripaludis (strain C5 / ATCC BAA-1333), this protein is Tetrahydromethanopterin S-methyltransferase subunit E.